Reading from the N-terminus, the 630-residue chain is FAST kinase domain-containing protein 4 (630 aa).

The 59-residue stretch at 560-618 (IAFLRWEFPNFNSRSKDLLGRFVLARRHVLAAGFLVVDVPYYEWLDLKSEWQKSAYLKD) folds into the RAP domain.

Belongs to the FAST kinase family. Expression detected in spleen, testis, colon, heart, smooth muscle, kidney, brain, lung, liver, brown and white adipose tissue with highest expression in testis, heart, smooth muscle and brown adipose tissue.

Its subcellular location is the mitochondrion matrix. Functionally, plays a role in processing of mitochondrial RNA precursors and in stabilization of a subset of mature mitochondrial RNA species, such as MT-CO1, MT-CO2, MT-CYB, MT-CO3, MT-ND3, MT-ND5 and MT-ATP8/6. May play a role in cell cycle progression. In Mus musculus (Mouse), this protein is FAST kinase domain-containing protein 4 (Tbrg4).